Consider the following 261-residue polypeptide: 5-oxoprolinase subunit A (261 aa).

This sequence belongs to the LamB/PxpA family. Forms a complex composed of PxpA, PxpB and PxpC.

The catalysed reaction is 5-oxo-L-proline + ATP + 2 H2O = L-glutamate + ADP + phosphate + H(+). Functionally, catalyzes the cleavage of 5-oxoproline to form L-glutamate coupled to the hydrolysis of ATP to ADP and inorganic phosphate. This chain is 5-oxoprolinase subunit A, found in Coprothermobacter proteolyticus (strain ATCC 35245 / DSM 5265 / OCM 4 / BT).